The following is a 219-amino-acid chain: MSIQIFCDFDGTITNSDNITSIMEHFAPPKAEEIKKQILAQELSIQEGVEQLFHLLPTNLHDDMIAFLKNNASIRSGFQEFVQFINKNDLSFYVILGGMDFFVHPLLDGLVPKEKIYCNETDFSKEYIEVKWPYPCDKHCNHHCGLCKSTLIRRLSSQQDFRIVIGDSITDLQAAKQADKVFARDFLITKCKEYHIPYTPFHTFYDIQNELQHLVEVKL.

The protein belongs to the HAD-like hydrolase superfamily. MtnX family.

The enzyme catalyses 2-hydroxy-5-methylsulfanyl-3-oxopent-1-enyl phosphate + H2O = 1,2-dihydroxy-5-(methylsulfanyl)pent-1-en-3-one + phosphate. It participates in amino-acid biosynthesis; L-methionine biosynthesis via salvage pathway; L-methionine from S-methyl-5-thio-alpha-D-ribose 1-phosphate: step 4/6. Its function is as follows. Dephosphorylates 2-hydroxy-3-keto-5-methylthiopentenyl-1-phosphate (HK-MTPenyl-1-P) yielding 1,2-dihydroxy-3-keto-5-methylthiopentene (DHK-MTPene). The chain is 2-hydroxy-3-keto-5-methylthiopentenyl-1-phosphate phosphatase from Bacillus cytotoxicus (strain DSM 22905 / CIP 110041 / 391-98 / NVH 391-98).